The primary structure comprises 605 residues: Pyruvate decarboxylase 2 (605 aa).

Substrate-binding residues include aspartate 68 and histidine 155. A thiamine pyrophosphate binding region spans residues 433–515 (DSWFNCQKLK…FLINNGGYTI (83 aa)). Residues aspartate 483, asparagine 510, and glycine 512 each coordinate Mg(2+). Substrate is bound at residue glutamate 516.

It belongs to the TPP enzyme family. Homotetramer. It depends on a metal cation as a cofactor. Thiamine diphosphate is required as a cofactor.

The enzyme catalyses a 2-oxocarboxylate + H(+) = an aldehyde + CO2. The sequence is that of Pyruvate decarboxylase 2 (PDC2) from Oryza sativa subsp. japonica (Rice).